Here is a 566-residue protein sequence, read N- to C-terminus: Oxygen-dependent choline dehydrogenase (566 aa).

7–36 is an FAD binding site; the sequence is DYIICGAGSAGNVLATRLTEDPNVTVLLLE. The disordered stretch occupies residues 183–203; the sequence is QQEGFGPMDRTVTPKGRRAST. The Proton acceptor role is filled by H474.

This sequence belongs to the GMC oxidoreductase family. FAD serves as cofactor.

It carries out the reaction choline + A = betaine aldehyde + AH2. The catalysed reaction is betaine aldehyde + NAD(+) + H2O = glycine betaine + NADH + 2 H(+). The protein operates within amine and polyamine biosynthesis; betaine biosynthesis via choline pathway; betaine aldehyde from choline (cytochrome c reductase route): step 1/1. Involved in the biosynthesis of the osmoprotectant glycine betaine. Catalyzes the oxidation of choline to betaine aldehyde and betaine aldehyde to glycine betaine at the same rate. This Burkholderia ambifaria (strain ATCC BAA-244 / DSM 16087 / CCUG 44356 / LMG 19182 / AMMD) (Burkholderia cepacia (strain AMMD)) protein is Oxygen-dependent choline dehydrogenase.